We begin with the raw amino-acid sequence, 121 residues long: Cell division protein FtsL (121 aa).

Topologically, residues 1–34 are cytoplasmic; the sequence is MISRVTEALSKVKGSIGSNERHALPGVIGDDLLR. A helical transmembrane segment spans residues 35 to 57; sequence FGKLPLCLFICIILTAVTVVTTA. Topologically, residues 58–121 are periplasmic; that stretch reads HHTRLLTAQR…PSQENIVVQK (64 aa).

Belongs to the FtsL family. Part of a complex composed of FtsB, FtsL and FtsQ.

It is found in the cell inner membrane. Functionally, essential cell division protein. May link together the upstream cell division proteins, which are predominantly cytoplasmic, with the downstream cell division proteins, which are predominantly periplasmic. The protein is Cell division protein FtsL of Salmonella typhimurium (strain LT2 / SGSC1412 / ATCC 700720).